Consider the following 252-residue polypeptide: Small ribosomal subunit protein eS4 (252 aa).

In terms of domain architecture, S4 RNA-binding spans 43–105 (FPLLIIVRDI…TGETYRVIPV (63 aa)).

This sequence belongs to the eukaryotic ribosomal protein eS4 family.

This Staphylothermus marinus (strain ATCC 43588 / DSM 3639 / JCM 9404 / F1) protein is Small ribosomal subunit protein eS4.